Reading from the N-terminus, the 553-residue chain is Membrane protein insertase YidC (553 aa).

5 helical membrane-spanning segments follow: residues 7-24, 365-385, 435-455, 474-494, and 509-529; these read VLWV…DNWQ, WGWA…PLSA, LPVV…LASV, PFFI…SLNP, and PIAF…YYVV.

This sequence belongs to the OXA1/ALB3/YidC family. Type 1 subfamily. In terms of assembly, interacts with the Sec translocase complex via SecD. Specifically interacts with transmembrane segments of nascent integral membrane proteins during membrane integration.

It localises to the cell inner membrane. Its function is as follows. Required for the insertion and/or proper folding and/or complex formation of integral membrane proteins into the membrane. Involved in integration of membrane proteins that insert both dependently and independently of the Sec translocase complex, as well as at least some lipoproteins. Aids folding of multispanning membrane proteins. In Burkholderia orbicola (strain MC0-3), this protein is Membrane protein insertase YidC.